The following is a 1732-amino-acid chain: Serine/threonine-protein kinase MRCK alpha (1732 aa).

The Protein kinase domain occupies phenylalanine 77–phenylalanine 343. ATP contacts are provided by residues isoleucine 83–valine 91 and lysine 106. The active-site Proton acceptor is aspartate 201. 2 positions are modified to phosphoserine; by autocatalysis: serine 222 and serine 234. Threonine 240 is modified (phosphothreonine; by autocatalysis). The AGC-kinase C-terminal domain occupies serine 344–serine 414. 3 coiled-coil regions span residues asparagine 437–glutamine 670, serine 713–glutamine 820, and leucine 880–glycine 943. Positions cysteine 973–alanine 1002 are disordered. A Phorbol-ester/DAG-type zinc finger spans residues threonine 1012 to cysteine 1062. The 120-residue stretch at glycine 1082–lysine 1201 folds into the PH domain. Serine 1127 carries the phosphoserine modification. A CNH domain is found at isoleucine 1227–asparagine 1499. Serine 1545 carries the phosphoserine modification. Residues isoleucine 1571–glycine 1584 enclose the CRIB domain. The disordered stretch occupies residues leucine 1592 to proline 1732. The segment covering serine 1604–lysine 1619 has biased composition (polar residues). Phosphoserine is present on residues serine 1611, serine 1613, serine 1629, serine 1651, serine 1664, serine 1669, serine 1693, serine 1719, and serine 1721. A compositionally biased stretch (low complexity) spans glycine 1625–alanine 1640. Residues proline 1665 to glycine 1674 are compositionally biased toward low complexity.

This sequence belongs to the protein kinase superfamily. AGC Ser/Thr protein kinase family. DMPK subfamily. Homodimer and homotetramer via the coiled coil regions. Interacts tightly with GTP-bound but not GDP-bound CDC42. Forms a tripartite complex with MYO18A and LURAP1 with the latter acting as an adapter connecting CDC42BPA and MYO18A. LURAP1 binding results in activation of CDC42BPA by abolition of its negative autoregulation. Interacts with LURAP1. Interacts (via AGC-kinase C-terminal domain) with FAM89B/LRAP25 (via LRR repeat). Forms a tripartite complex with FAM89B/LRAP25 and LIMK1. Mg(2+) serves as cofactor. Proteolytically cleaved by caspases upon apoptosis induction. The cleavage at Asp-478 by CASP3 increases its kinase activity (in vitro). As to expression, highly expressed in the brain and lung and present in lower levels in all other tissues tested.

The protein localises to the cytoplasm. Its subcellular location is the cell projection. It is found in the lamellipodium. The catalysed reaction is L-seryl-[protein] + ATP = O-phospho-L-seryl-[protein] + ADP + H(+). It catalyses the reaction L-threonyl-[protein] + ATP = O-phospho-L-threonyl-[protein] + ADP + H(+). With respect to regulation, maintained in an inactive, closed conformation by an interaction between the kinase domain and the negative autoregulatory C-terminal coiled-coil region. Agonist binding to the phorbol ester binding site disrupts this, releasing the kinase domain to allow N-terminus-mediated dimerization and kinase activation by transautophosphorylation. Inhibited by chelerythrine chloride. In terms of biological role, serine/threonine-protein kinase which is an important downstream effector of CDC42 and plays a role in the regulation of cytoskeleton reorganization and cell migration. Regulates actin cytoskeletal reorganization via phosphorylation of PPP1R12A and MYL9/MLC2. In concert with MYO18A and LURAP1, is involved in modulating lamellar actomyosin retrograde flow that is crucial to cell protrusion and migration. Phosphorylates: PPP1R12C, LIMK1 and LIMK2. May play a role in TFRC-mediated iron uptake. In concert with FAM89B/LRAP25 mediates the targeting of LIMK1 to the lamellipodium resulting in its activation and subsequent phosphorylation of CFL1 which is important for lamellipodial F-actin regulation. Triggers the formation of an extrusion apical actin ring required for epithelial extrusion of apoptotic cells. This is Serine/threonine-protein kinase MRCK alpha from Rattus norvegicus (Rat).